Here is a 347-residue protein sequence, read N- to C-terminus: Dihydroorotase (347 aa).

2 residues coordinate Zn(2+): His14 and His16. Residues 16–18 and Asn42 each bind substrate; that span reads HLR. Lys100, His137, and His175 together coordinate Zn(2+). Lys100 is subject to N6-carboxylysine. His137 serves as a coordination point for substrate. Leu220 provides a ligand contact to substrate. Asp248 contributes to the Zn(2+) binding site. The active site involves Asp248. Substrate contacts are provided by His252 and Ala264.

Belongs to the metallo-dependent hydrolases superfamily. DHOase family. Class II DHOase subfamily. Homodimer. Zn(2+) is required as a cofactor.

It catalyses the reaction (S)-dihydroorotate + H2O = N-carbamoyl-L-aspartate + H(+). It functions in the pathway pyrimidine metabolism; UMP biosynthesis via de novo pathway; (S)-dihydroorotate from bicarbonate: step 3/3. Its function is as follows. Catalyzes the reversible cyclization of carbamoyl aspartate to dihydroorotate. This chain is Dihydroorotase, found in Pseudomonas savastanoi pv. phaseolicola (strain 1448A / Race 6) (Pseudomonas syringae pv. phaseolicola (strain 1448A / Race 6)).